A 166-amino-acid chain; its full sequence is Small ribosomal subunit protein uS5 (166 aa).

The S5 DRBM domain maps to 11 to 74 (LQEKLVQVNR…DQARRNMVKV (64 aa)).

The protein belongs to the universal ribosomal protein uS5 family. Part of the 30S ribosomal subunit. Contacts proteins S4 and S8.

Its function is as follows. With S4 and S12 plays an important role in translational accuracy. In terms of biological role, located at the back of the 30S subunit body where it stabilizes the conformation of the head with respect to the body. In Chromohalobacter salexigens (strain ATCC BAA-138 / DSM 3043 / CIP 106854 / NCIMB 13768 / 1H11), this protein is Small ribosomal subunit protein uS5.